The primary structure comprises 628 residues: Protein ETHYLENE INSENSITIVE 3 (628 aa).

Positions 38 to 68 form a coiled coil; it reads EDDYTDDEIDVDELERRMWRDKMRLKRLKEQ. Residues 66 to 79 are compositionally biased toward basic and acidic residues; it reads KEQDKGKEGVDAAK. Residues 66–92 form a disordered region; it reads KEQDKGKEGVDAAKQRQSQEQARRKKM. Residues 174–306 form a DNA-binding domain region; it reads TPHTLQELQD…SLARELYPES (133 aa).

It belongs to the EIN3 family. In terms of assembly, acts as a homodimer to bind the primary ethylene response element. Interacts with TAF12B. Interacts with KIN10. Binds to ENAP1 in the presence of ethylene; this reaction facilitates its association with histone. Post-translationally, phosphorylated by KIN10.

The protein resides in the nucleus. Its activity is regulated as follows. Activated by phosphorylation by MPK3 and MPK6. Down-regulated by KIN10 that controls its protein stability under a phosphorylation-dependent manner. Satnilitzed during hypoxia (e.g. submergences) via a ceramides-triggered and CTR1-dependent manner. In terms of biological role, transcription factor acting as a positive regulator in the ethylene response pathway, by promoting histone acetylation in an ENAP1-dependent manner, thus accelerating the expression of ethylene-responsive genes. Binds DNA. Is required for ethylene responsiveness in adult plant tissues. Binds a primary ethylene response element present in the ETHYLENE-RESPONSE-FACTOR1 promoter with consequence to activate the transcription of this gene. In Arabidopsis thaliana (Mouse-ear cress), this protein is Protein ETHYLENE INSENSITIVE 3.